The sequence spans 342 residues: MRSTKVIHIVGCHAEGEVGDVIVGGVAPPPGETVWEQSRFIANDETLRNFVLNEPRGGVFRHVNLLVPPKDPRAQMGFIIMEPADTPPMSGSNSICVSTVLLDSGIIAMQEPVTHMVLEAPGGIIEVEAECRNGKAERISVRNVPSFADRLDAPLDVTGLGTIMVDTVYGGDSFVIVDAAQIGMKIEPGQARELAEIGVKITKAANEQLGFRHPERDWRHISFCQITEPVTREGDVLTGVNTVAIRPAKLDRSPTGTGCSARMAVLHAKGQMKAGERFIGKSVLGTEFHCRLDKVLELGGKPAISPIISGRAWVTGTSQLMLDPSDPFPHGYRLSDTWPRDE.

The protein belongs to the proline racemase family.

This is an uncharacterized protein from Brucella canis (strain ATCC 23365 / NCTC 10854 / RM-666).